The sequence spans 230 residues: Small ribosomal subunit protein uS2 (230 aa).

It belongs to the universal ribosomal protein uS2 family.

The protein is Small ribosomal subunit protein uS2 of Prochlorococcus marinus (strain NATL2A).